The following is a 171-amino-acid chain: Protein GrpE (171 aa).

The interval 1-22 (MNHEHPDIESQQSAADAAAAAG) is disordered.

It belongs to the GrpE family. As to quaternary structure, homodimer.

It localises to the cytoplasm. Participates actively in the response to hyperosmotic and heat shock by preventing the aggregation of stress-denatured proteins, in association with DnaK and GrpE. It is the nucleotide exchange factor for DnaK and may function as a thermosensor. Unfolded proteins bind initially to DnaJ; upon interaction with the DnaJ-bound protein, DnaK hydrolyzes its bound ATP, resulting in the formation of a stable complex. GrpE releases ADP from DnaK; ATP binding to DnaK triggers the release of the substrate protein, thus completing the reaction cycle. Several rounds of ATP-dependent interactions between DnaJ, DnaK and GrpE are required for fully efficient folding. This is Protein GrpE from Stenotrophomonas maltophilia (strain R551-3).